The sequence spans 249 residues: Octanoyltransferase (249 aa).

Residues 53–234 form the BPL/LPL catalytic domain; sequence PDTDDEIWVV…RLIAHLDGAT (182 aa). Residues 93–100, 165–167, and 178–180 contribute to the substrate site; these read RGGQITYH, ALG, and GLS. Residue Cys-196 is the Acyl-thioester intermediate of the active site.

This sequence belongs to the LipB family.

The protein localises to the cytoplasm. The enzyme catalyses octanoyl-[ACP] + L-lysyl-[protein] = N(6)-octanoyl-L-lysyl-[protein] + holo-[ACP] + H(+). Its pathway is protein modification; protein lipoylation via endogenous pathway; protein N(6)-(lipoyl)lysine from octanoyl-[acyl-carrier-protein]: step 1/2. In terms of biological role, catalyzes the transfer of endogenously produced octanoic acid from octanoyl-acyl-carrier-protein onto the lipoyl domains of lipoate-dependent enzymes. Lipoyl-ACP can also act as a substrate although octanoyl-ACP is likely to be the physiological substrate. The chain is Octanoyltransferase from Burkholderia mallei (strain NCTC 10247).